The chain runs to 135 residues: Large ribosomal subunit protein uL18c (135 aa).

This sequence belongs to the universal ribosomal protein uL18 family. Part of the 50S ribosomal subunit; contacts the 5S rRNA.

The protein localises to the plastid. The protein resides in the chloroplast. Binds 5S rRNA, forms part of the central protuberance of the 50S subunit. This Phaeodactylum tricornutum (strain CCAP 1055/1) protein is Large ribosomal subunit protein uL18c (rpl18).